We begin with the raw amino-acid sequence, 544 residues long: Methionine--tRNA ligase (544 aa).

The 'HIGH' region motif lies at Pro10–His20. Zn(2+) is bound by residues Cys141, Cys144, Cys153, and Cys156. A 'KMSKS' region motif is present at residues Lys329–Ser333. Thr332 contacts ATP.

The protein belongs to the class-I aminoacyl-tRNA synthetase family. MetG type 1 subfamily. As to quaternary structure, monomer. Zn(2+) serves as cofactor.

Its subcellular location is the cytoplasm. It carries out the reaction tRNA(Met) + L-methionine + ATP = L-methionyl-tRNA(Met) + AMP + diphosphate. Is required not only for elongation of protein synthesis but also for the initiation of all mRNA translation through initiator tRNA(fMet) aminoacylation. The protein is Methionine--tRNA ligase of Bacillus cereus (strain 03BB102).